A 147-amino-acid polypeptide reads, in one-letter code: 18 kDa antigen 1 (147 aa).

Residues 21 to 131 (TPTRPAVMPM…RPRKIAVGAA (111 aa)) enclose the sHSP domain.

It belongs to the small heat shock protein (HSP20) family.

Its function is as follows. Not known. This protein is one of the major immune reactive proteins in mycobacteria. This chain is 18 kDa antigen 1, found in Mycobacterium avium.